The chain runs to 600 residues: E3 ubiquitin-protein ligase RLIM (600 aa).

Met1 is subject to N-acetylmethionine. Positions 1–11 (MENSDSNDKGS) are enriched in basic and acidic residues. Disordered stretches follow at residues 1–24 (MENS…QMDR), 49–355 (NNLL…ERGG), and 417–497 (SDSE…VTFD). Polar residues-rich tracts occupy residues 103–131 (SVRQ…NPNS) and 140–152 (INVN…QTSE). Residue Ser163 is modified to Phosphoserine. Polar residues predominate over residues 166–175 (NMESSSQRQM). Over residues 176 to 187 (ENSASESASARP) the composition is skewed to low complexity. A phosphoserine mark is found at Ser194, Ser227, and Ser229. Residues 213–228 (RSPEHRRTRARAERSR) are compositionally biased toward basic and acidic residues. A compositionally biased stretch (polar residues) spans 244 to 255 (LEQSSENEPEGS). Residue Ser269 is modified to Phosphoserine. The span at 288 to 306 (SQGTSSSDTGSNSESSGSG) shows a compositional bias: low complexity. Positions 322–332 (RPGEYRQRDSI) are enriched in basic and acidic residues. The span at 333–349 (ASRTRSRSQAPNNTVTY) shows a compositional bias: polar residues. A compositionally biased stretch (low complexity) spans 448–475 (SGSSSSSSPSPSSSGESSESSSEMFEGS). The RING-type zinc-finger motif lies at 546–587 (CSVCITEYTEGNKLRKLPCSHEYHVHCIDRWLSENSTCPICR). The PDZ-binding signature appears at 597–600 (ESVV).

The protein belongs to the RNF12 family. In terms of assembly, interacts (via N-terminus) with TERF1. Interacts (via C-terminus) with ESR1. Interacts with LIM/homeobox factors such as LHX3. Interacts with LDB1, LDB2 and SIN3A. Interacts with LIMK1.

It is found in the nucleus. It catalyses the reaction S-ubiquitinyl-[E2 ubiquitin-conjugating enzyme]-L-cysteine + [acceptor protein]-L-lysine = [E2 ubiquitin-conjugating enzyme]-L-cysteine + N(6)-ubiquitinyl-[acceptor protein]-L-lysine.. The protein operates within protein modification; protein ubiquitination. Functionally, E3 ubiquitin-protein ligase that acts as a negative coregulator for LIM homeodomain transcription factors by mediating the ubiquitination and subsequent degradation of LIM cofactors LDB1 and LDB2 and by mediating the recruitment the SIN3a/histone deacetylase corepressor complex. Ubiquitination and degradation of LIM cofactors LDB1 and LDB2 allows DNA-bound LIM homeodomain transcription factors to interact with other protein partners such as RLIM. Plays a role in telomere length-mediated growth suppression by mediating the ubiquitination and degradation of TERF1. By targeting ZFP42 for degradation, acts as an activator of random inactivation of X chromosome in the embryo, a stochastic process in which one X chromosome is inactivated to minimize sex-related dosage differences of X-encoded genes in somatic cells of female placental mammals. The polypeptide is E3 ubiquitin-protein ligase RLIM (Rlim) (Mus musculus (Mouse)).